The sequence spans 494 residues: Guanosine-5'-triphosphate,3'-diphosphate pyrophosphatase (494 aa).

This sequence belongs to the GppA/Ppx family. GppA subfamily.

The enzyme catalyses guanosine 3'-diphosphate 5'-triphosphate + H2O = guanosine 3',5'-bis(diphosphate) + phosphate + H(+). It functions in the pathway purine metabolism; ppGpp biosynthesis; ppGpp from GTP: step 2/2. Functionally, catalyzes the conversion of pppGpp to ppGpp. Guanosine pentaphosphate (pppGpp) is a cytoplasmic signaling molecule which together with ppGpp controls the 'stringent response', an adaptive process that allows bacteria to respond to amino acid starvation, resulting in the coordinated regulation of numerous cellular activities. The protein is Guanosine-5'-triphosphate,3'-diphosphate pyrophosphatase of Shigella flexneri.